Consider the following 460-residue polypeptide: Argininosuccinate lyase (460 aa).

It belongs to the lyase 1 family. Argininosuccinate lyase subfamily.

The protein resides in the cytoplasm. It carries out the reaction 2-(N(omega)-L-arginino)succinate = fumarate + L-arginine. Its pathway is amino-acid biosynthesis; L-arginine biosynthesis; L-arginine from L-ornithine and carbamoyl phosphate: step 3/3. The sequence is that of Argininosuccinate lyase from Prosthecochloris aestuarii (strain DSM 271 / SK 413).